The following is a 117-amino-acid chain: Protein OPG035 (117 aa).

The protein belongs to the poxviridae OPG035 family.

Functionally, bcl-2-like protein which contributes to virulence by preventing host NF-kappa-B activation in response to pro-inflammatory stimuli such as TNF-alpha or IL1B. In Bos taurus (Bovine), this protein is Protein OPG035 (OPG035).